We begin with the raw amino-acid sequence, 216 residues long: Peptide deformylase 1 (216 aa).

Fe cation contacts are provided by C135 and H177. E178 is a catalytic residue. H181 is a binding site for Fe cation.

The protein belongs to the polypeptide deformylase family. Requires Fe(2+) as cofactor.

It carries out the reaction N-terminal N-formyl-L-methionyl-[peptide] + H2O = N-terminal L-methionyl-[peptide] + formate. Removes the formyl group from the N-terminal Met of newly synthesized proteins. Requires at least a dipeptide for an efficient rate of reaction. N-terminal L-methionine is a prerequisite for activity but the enzyme has broad specificity at other positions. In Streptomyces avermitilis (strain ATCC 31267 / DSM 46492 / JCM 5070 / NBRC 14893 / NCIMB 12804 / NRRL 8165 / MA-4680), this protein is Peptide deformylase 1.